The primary structure comprises 501 residues: Glutamyl-tRNA(Gln) amidotransferase subunit A (501 aa).

Active-site charge relay system residues include Lys80 and Ser155. Ser179 acts as the Acyl-ester intermediate in catalysis.

The protein belongs to the amidase family. GatA subfamily. As to quaternary structure, heterotrimer of A, B and C subunits.

The enzyme catalyses L-glutamyl-tRNA(Gln) + L-glutamine + ATP + H2O = L-glutaminyl-tRNA(Gln) + L-glutamate + ADP + phosphate + H(+). In terms of biological role, allows the formation of correctly charged Gln-tRNA(Gln) through the transamidation of misacylated Glu-tRNA(Gln) in organisms which lack glutaminyl-tRNA synthetase. The reaction takes place in the presence of glutamine and ATP through an activated gamma-phospho-Glu-tRNA(Gln). The sequence is that of Glutamyl-tRNA(Gln) amidotransferase subunit A from Cupriavidus pinatubonensis (strain JMP 134 / LMG 1197) (Cupriavidus necator (strain JMP 134)).